Consider the following 754-residue polypeptide: 1,4-alpha-glucan branching enzyme GlgB (754 aa).

Asp-431 serves as the catalytic Nucleophile. Glu-484 serves as the catalytic Proton donor.

The protein belongs to the glycosyl hydrolase 13 family. GlgB subfamily. Monomer.

The catalysed reaction is Transfers a segment of a (1-&gt;4)-alpha-D-glucan chain to a primary hydroxy group in a similar glucan chain.. It participates in glycan biosynthesis; glycogen biosynthesis. In terms of biological role, catalyzes the formation of the alpha-1,6-glucosidic linkages in glycogen by scission of a 1,4-alpha-linked oligosaccharide from growing alpha-1,4-glucan chains and the subsequent attachment of the oligosaccharide to the alpha-1,6 position. The protein is 1,4-alpha-glucan branching enzyme GlgB of Prochlorococcus marinus subsp. pastoris (strain CCMP1986 / NIES-2087 / MED4).